The following is a 332-amino-acid chain: Anthranilate phosphoribosyltransferase (332 aa).

5-phospho-alpha-D-ribose 1-diphosphate contacts are provided by residues Gly79, 82 to 83, Ser87, 89 to 92, 107 to 115, and Ser119; these read GD, NIST, and KHGNRSVSS. Gly79 contributes to the anthranilate binding site. Mg(2+) is bound at residue Ser91. Asn110 lines the anthranilate pocket. Arg165 provides a ligand contact to anthranilate. Asp223 and Glu224 together coordinate Mg(2+).

It belongs to the anthranilate phosphoribosyltransferase family. Homodimer. Mg(2+) serves as cofactor.

It carries out the reaction N-(5-phospho-beta-D-ribosyl)anthranilate + diphosphate = 5-phospho-alpha-D-ribose 1-diphosphate + anthranilate. It functions in the pathway amino-acid biosynthesis; L-tryptophan biosynthesis; L-tryptophan from chorismate: step 2/5. In terms of biological role, catalyzes the transfer of the phosphoribosyl group of 5-phosphorylribose-1-pyrophosphate (PRPP) to anthranilate to yield N-(5'-phosphoribosyl)-anthranilate (PRA). The polypeptide is Anthranilate phosphoribosyltransferase (Yersinia pseudotuberculosis serotype O:3 (strain YPIII)).